The following is a 215-amino-acid chain: Probable phosphoglycerate mutase GpmB (215 aa).

Substrate-binding positions include 8–15 (RHGETEWN), 21–22 (QG), Arg-58, 82–85 (ELDM), and 151–152 (GI). His-9 serves as the catalytic Tele-phosphohistidine intermediate. Glu-82 serves as the catalytic Proton donor/acceptor.

It belongs to the phosphoglycerate mutase family. GpmB subfamily.

The catalysed reaction is (2R)-2-phosphoglycerate = (2R)-3-phosphoglycerate. Its pathway is carbohydrate degradation; glycolysis; pyruvate from D-glyceraldehyde 3-phosphate: step 3/5. The sequence is that of Probable phosphoglycerate mutase GpmB from Proteus mirabilis (strain HI4320).